Reading from the N-terminus, the 414-residue chain is UPF0754 membrane protein tlr2287 (414 aa).

The next 2 membrane-spanning stretches (helical) occupy residues 2-22 and 386-406; these read ADIS…IGYF and AIVR…AGVL.

Belongs to the UPF0754 family.

It is found in the cell inner membrane. In Thermosynechococcus vestitus (strain NIES-2133 / IAM M-273 / BP-1), this protein is UPF0754 membrane protein tlr2287.